The chain runs to 199 residues: Peptidyl-tRNA hydrolase (199 aa).

Tyrosine 18 provides a ligand contact to tRNA. The active-site Proton acceptor is histidine 23. The tRNA site is built by tyrosine 72, asparagine 74, and asparagine 120.

It belongs to the PTH family. In terms of assembly, monomer.

The protein localises to the cytoplasm. It carries out the reaction an N-acyl-L-alpha-aminoacyl-tRNA + H2O = an N-acyl-L-amino acid + a tRNA + H(+). In terms of biological role, hydrolyzes ribosome-free peptidyl-tRNAs (with 1 or more amino acids incorporated), which drop off the ribosome during protein synthesis, or as a result of ribosome stalling. Functionally, catalyzes the release of premature peptidyl moieties from peptidyl-tRNA molecules trapped in stalled 50S ribosomal subunits, and thus maintains levels of free tRNAs and 50S ribosomes. The sequence is that of Peptidyl-tRNA hydrolase from Bifidobacterium animalis subsp. lactis (strain AD011).